Reading from the N-terminus, the 265-residue chain is 2-Cys peroxiredoxin BAS1, chloroplastic (265 aa).

A chloroplast-targeting transit peptide spans methionine 1–valine 65. The Thioredoxin domain occupies proline 73–tyrosine 232. The Cysteine sulfenic acid (-SOH) intermediate role is filled by cysteine 119.

This sequence belongs to the peroxiredoxin family. AhpC/Prx1 subfamily. As to quaternary structure, homodimer; disulfide-linked, upon oxidation.

It is found in the plastid. The protein resides in the chloroplast. It carries out the reaction a hydroperoxide + [thioredoxin]-dithiol = an alcohol + [thioredoxin]-disulfide + H2O. Thiol-specific peroxidase that catalyzes the reduction of hydrogen peroxide and organic hydroperoxides to water and alcohols, respectively. Plays a role in cell protection against oxidative stress by detoxifying peroxides. May be an antioxidant enzyme particularly in the developing shoot and photosynthesizing leaf. The sequence is that of 2-Cys peroxiredoxin BAS1, chloroplastic (BAS1) from Spinacia oleracea (Spinach).